Consider the following 807-residue polypeptide: Probable phosphoketolase (807 aa).

This sequence belongs to the XFP family. The cofactor is thiamine diphosphate.

In Nitrosospira multiformis (strain ATCC 25196 / NCIMB 11849 / C 71), this protein is Probable phosphoketolase.